The chain runs to 213 residues: 5-methylthioribulose-1-phosphate/5-deoxyribulose-1-phosphate aldolase (213 aa).

Glu73 serves as the catalytic Proton donor/acceptor. Co(2+)-binding residues include Glu73, His92, His94, and His155.

This sequence belongs to the aldolase class II family. It depends on Co(2+) as a cofactor.

The catalysed reaction is 5-(methylsulfanyl)-D-ribulose 1-phosphate = 2-(methylsulfanyl)acetaldehyde + dihydroxyacetone phosphate. It carries out the reaction 5-deoxy-D-ribulose 1-phosphate = dihydroxyacetone phosphate + acetaldehyde. Its pathway is amino-acid biosynthesis; L-methionine biosynthesis via salvage pathway. Functionally, uses 5-methylthioribulose-1-phosphate to yield 2-(methylthio)acetaldehyde and dihydroxyacetone phosphate. Can also use 5-deoxyribulose 1-phosphate to yield acetaldehyde and dihydroxyacetone phosphate. Part of a bifunctional DHAP-shunt salvage pathway for SAM by-products. The protein is 5-methylthioribulose-1-phosphate/5-deoxyribulose-1-phosphate aldolase of Escherichia coli O45:K1 (strain S88 / ExPEC).